We begin with the raw amino-acid sequence, 269 residues long: Tryptophan synthase alpha chain (269 aa).

Residues glutamate 50 and aspartate 61 each act as proton acceptor in the active site.

Belongs to the TrpA family. As to quaternary structure, tetramer of two alpha and two beta chains.

It carries out the reaction (1S,2R)-1-C-(indol-3-yl)glycerol 3-phosphate + L-serine = D-glyceraldehyde 3-phosphate + L-tryptophan + H2O. It functions in the pathway amino-acid biosynthesis; L-tryptophan biosynthesis; L-tryptophan from chorismate: step 5/5. Its function is as follows. The alpha subunit is responsible for the aldol cleavage of indoleglycerol phosphate to indole and glyceraldehyde 3-phosphate. The chain is Tryptophan synthase alpha chain from Francisella tularensis subsp. tularensis (strain FSC 198).